A 251-amino-acid chain; its full sequence is 1-(5-phosphoribosyl)-5-[(5-phosphoribosylamino)methylideneamino] imidazole-4-carboxamide isomerase (251 aa).

Catalysis depends on Asp-8, which acts as the Proton acceptor. Residue Asp-131 is the Proton donor of the active site.

This sequence belongs to the HisA/HisF family.

The protein localises to the cytoplasm. The enzyme catalyses 1-(5-phospho-beta-D-ribosyl)-5-[(5-phospho-beta-D-ribosylamino)methylideneamino]imidazole-4-carboxamide = 5-[(5-phospho-1-deoxy-D-ribulos-1-ylimino)methylamino]-1-(5-phospho-beta-D-ribosyl)imidazole-4-carboxamide. Its pathway is amino-acid biosynthesis; L-histidine biosynthesis; L-histidine from 5-phospho-alpha-D-ribose 1-diphosphate: step 4/9. The polypeptide is 1-(5-phosphoribosyl)-5-[(5-phosphoribosylamino)methylideneamino] imidazole-4-carboxamide isomerase (Azoarcus sp. (strain BH72)).